The chain runs to 109 residues: Cytochrome c-550 (109 aa).

Residues cysteine 13, cysteine 16, histidine 17, and methionine 79 each coordinate heme c.

Post-translationally, binds 1 heme c group covalently per subunit.

This Nitrobacter winogradskyi (Nitrobacter agilis) protein is Cytochrome c-550.